The chain runs to 622 residues: UvrABC system protein C (622 aa).

Positions 13 to 92 constitute a GIY-YIG domain; that stretch reads DKPGVYLMKN…IKKYRPRYNI (80 aa). The UVR domain maps to 204-239; sequence KDIIRKLKEDMDTLSENMEFEKAAELRDKIFALEKI.

The protein belongs to the UvrC family. As to quaternary structure, interacts with UvrB in an incision complex.

The protein resides in the cytoplasm. Functionally, the UvrABC repair system catalyzes the recognition and processing of DNA lesions. UvrC both incises the 5' and 3' sides of the lesion. The N-terminal half is responsible for the 3' incision and the C-terminal half is responsible for the 5' incision. This chain is UvrABC system protein C, found in Clostridium kluyveri (strain ATCC 8527 / DSM 555 / NBRC 12016 / NCIMB 10680 / K1).